Here is a 217-residue protein sequence, read N- to C-terminus: Proteasome subunit beta type-9 (217 aa).

A propeptide spans Met1–Gly18 (removed in mature form). Thr19 acts as the Nucleophile in catalysis.

This sequence belongs to the peptidase T1B family. As to quaternary structure, the 26S proteasome consists of a 20S proteasome core and two 19S regulatory subunits. The 20S proteasome core is composed of 28 subunits that are arranged in four stacked rings, resulting in a barrel-shaped structure. The two end rings are each formed by seven alpha subunits, and the two central rings are each formed by seven beta subunits. The catalytic chamber with the active sites is on the inside of the barrel. Component of the immunoproteasome, where it displaces the equivalent housekeeping subunit PSMB6. Post-translationally, autocleaved. The resulting N-terminal Thr residue of the mature subunit is responsible for the nucleophile proteolytic activity.

The protein localises to the cytoplasm. Its subcellular location is the nucleus. The catalysed reaction is Cleavage of peptide bonds with very broad specificity.. In terms of biological role, the proteasome is a multicatalytic proteinase complex which is characterized by its ability to cleave peptides with Arg, Phe, Tyr, Leu, and Glu adjacent to the leaving group at neutral or slightly basic pH. The proteasome has an ATP-dependent proteolytic activity. This subunit is involved in antigen processing to generate class I binding peptides. This chain is Proteasome subunit beta type-9 (psmb9-a), found in Salmo salar (Atlantic salmon).